A 396-amino-acid polypeptide reads, in one-letter code: Phosphoglycerate kinase (396 aa).

Residues 21-23, arginine 36, 59-62, arginine 118, and arginine 151 contribute to the substrate site; these read DFN and HLGR. ATP-binding positions include lysine 201, glycine 292, glutamate 323, and 349 to 352; that span reads GGDS.

This sequence belongs to the phosphoglycerate kinase family. In terms of assembly, monomer.

Its subcellular location is the cytoplasm. It carries out the reaction (2R)-3-phosphoglycerate + ATP = (2R)-3-phospho-glyceroyl phosphate + ADP. The protein operates within carbohydrate degradation; glycolysis; pyruvate from D-glyceraldehyde 3-phosphate: step 2/5. This Leptospira borgpetersenii serovar Hardjo-bovis (strain L550) protein is Phosphoglycerate kinase.